A 90-amino-acid chain; its full sequence is Progonadoliberin-3 (90 aa).

Residues 1–23 form the signal peptide; it reads MEASSRVTVQVLLLALVVQVTLS. A Pyrrolidone carboxylic acid modification is found at Gln24. Gly33 is subject to Glycine amide.

This sequence belongs to the GnRH family.

It localises to the secreted. In terms of biological role, stimulates the secretion of gonadotropins. The chain is Progonadoliberin-3 (gnrh3) from Sparus aurata (Gilthead sea bream).